The sequence spans 475 residues: Glycogen synthase (475 aa).

Residue lysine 15 coordinates ADP-alpha-D-glucose.

This sequence belongs to the glycosyltransferase 1 family. Bacterial/plant glycogen synthase subfamily.

It catalyses the reaction [(1-&gt;4)-alpha-D-glucosyl](n) + ADP-alpha-D-glucose = [(1-&gt;4)-alpha-D-glucosyl](n+1) + ADP + H(+). It functions in the pathway glycan biosynthesis; glycogen biosynthesis. Functionally, synthesizes alpha-1,4-glucan chains using ADP-glucose. This Anaeromyxobacter sp. (strain K) protein is Glycogen synthase.